We begin with the raw amino-acid sequence, 1181 residues long: Sodium/potassium/calcium exchanger 1 (1181 aa).

Residues 1–419 (MGKLIRMGTQ…DLFSVEDRRQ (419 aa)) are Extracellular-facing. 3 disordered regions span residues 107–232 (AMED…TSLK), 255–276 (SLVG…STTP), and 300–323 (STPA…GTST). Residues 124–136 (SLKNNYSPTTAGT) are compositionally biased toward polar residues. Asparagine 271 is a glycosylation site (N-linked (GlcNAc...) asparagine). Residues 301 to 311 (TPATTEGSTAA) are compositionally biased toward polar residues. Residues 420–440 (GWVVLHIFGMTYVFVALAIVC) form a helical membrane-spanning segment. Residues 441-464 (DEYFVPALGVITDKLQISEDVAGA) lie on the Cytoplasmic side of the membrane. One copy of the Alpha-1 repeat lies at 461-501 (VAGATFMAAGGSAPELFTSLIGVFISHSNVGIGTIVGSAVF). A helical transmembrane segment spans residues 465 to 485 (TFMAAGGSAPELFTSLIGVFI). The Extracellular portion of the chain corresponds to 486 to 491 (SHSNVG). A helical transmembrane segment spans residues 492–512 (IGTIVGSAVFNILFVIGTCAL). The Cytoplasmic segment spans residues 513 to 519 (FSREILN). A helical transmembrane segment spans residues 520–544 (LTWWPLFRDVSFYILDLSMLIVFFL). Residues 545–552 (DSLIAWWE) are Extracellular-facing. A helical membrane pass occupies residues 553–569 (SLLLLLAYALYVFTMKW). The Cytoplasmic portion of the chain corresponds to 570–989 (NKQIERWVKE…SLEWPESRQK (420 aa)). Residues 598–617 (PSDGAIEENEQQDNKKLKLP) are disordered. Phosphoserine is present on serine 625. The segment at 650-983 (GEARPSKDKQ…ESEEPLSLEW (334 aa)) is disordered. At threonine 690 the chain carries Phosphothreonine. The span at 701-715 (GDQEEDPGCQEDVDE) shows a compositional bias: acidic residues. 14 repeat units span residues 730–741 (ETEAEGKKDEEG), 742–754 (ETEA…GQEE), 755–766 (ETETKGKEKQEG), 767–778 (ETESEGKDEQEG), 779–791 (ETEA…DHEG), 792–804 (ETEA…EHEG), 805–817 (ETEA…EQEG), 818–830 (ETEA…EQEG), 831–843 (ETEA…EHEV), 844–856 (ETEA…NHEG), 857–869 (ETEA…DHEG), 870–881 (ETEAEGNVEHQG), 882–893 (ETEAEGKVEHEG), and 894–905 (ETEAGEKDEHEG). Basic and acidic residues-rich tracts occupy residues 730 to 750 (ETEA…RKED), 757 to 775 (ETKG…GKDE), and 782 to 805 (AEGK…HEGE). The tract at residues 730–905 (ETEAEGKKDE…EAGEKDEHEG (176 aa)) is 14 X approximate tandem repeats. Residues 806 to 820 (TEAEGTEDEQEGETE) are compositionally biased toward acidic residues. The segment covering 834 to 906 (AEGKEVEHEV…AGEKDEHEGQ (73 aa)) has biased composition (basic and acidic residues). 2 stretches are compositionally biased toward acidic residues: residues 921 to 931 (GEAEANAEDQC) and 949 to 979 (GDSE…EEPL). A helical membrane pass occupies residues 990 to 1010 (QAIYLFLLPIVFPLWLTIPDV). Topologically, residues 1011–1017 (RRQEARK) are extracellular. Residues 1018–1038 (FFVITFLGSIIWIAMFSYLMV) traverse the membrane as a helical segment. Over 1039 to 1053 (WWAHQVGETIGISEE) the chain is Cytoplasmic. The helical transmembrane segment at 1054–1074 (IMGLTILAAGTSIPDLITSVI) threads the bilayer. Residues 1061–1092 (AAGTSIPDLITSVIVARKGLGDMAVSSSVGSN) form an Alpha-2 repeat. Topologically, residues 1075–1092 (VARKGLGDMAVSSSVGSN) are extracellular. A helical membrane pass occupies residues 1093-1113 (IFDITVGLPVPWLLFSLINAL). Over 1114–1121 (QPIPVSSN) the chain is Cytoplasmic. A helical transmembrane segment spans residues 1122–1142 (GLFCAIVLLFLMLLFVIFSIA). Residues 1143–1150 (SCKWRMNK) are Extracellular-facing. Residues 1151-1171 (ILGFTMFLLYFVFLVISVMLE) traverse the membrane as a helical segment. Residues 1172–1181 (DRIISCPVSV) lie on the Cytoplasmic side of the membrane.

The protein belongs to the Ca(2+):cation antiporter (CaCA) (TC 2.A.19) family. SLC24A subfamily. The uncleaved signal sequence is required for efficient membrane targeting and proper membrane integration and topology. As to expression, highly expressed in the eye.

It is found in the cell membrane. The catalysed reaction is Ca(2+)(out) + K(+)(out) + 4 Na(+)(in) = Ca(2+)(in) + K(+)(in) + 4 Na(+)(out). Calcium, potassium:sodium antiporter that transports 1 Ca(2+) and 1 K(+) in exchange for 4 Na(+). Critical component of the visual transduction cascade, controlling the calcium concentration of outer segments during light and darkness. Light causes a rapid lowering of cytosolic free calcium in the outer segment of both retinal rod and cone photoreceptors and the light-induced lowering of calcium is caused by extrusion via this protein which plays a key role in the process of light adaptation. In Rattus norvegicus (Rat), this protein is Sodium/potassium/calcium exchanger 1 (Slc24a1).